We begin with the raw amino-acid sequence, 662 residues long: Bifunctional polymyxin resistance protein ArnA (662 aa).

Residues 1–307 (MTSKAVVFAY…ELGLVEGARL (307 aa)) form a formyltransferase ArnAFT region. His106 functions as the Proton donor; for formyltransferase activity in the catalytic mechanism. (6R)-10-formyltetrahydrofolate-binding positions include Arg116 and 138–142 (IERAD). The tract at residues 316–662 (RRTRVLILGV…EALREREAQA (347 aa)) is dehydrogenase ArnADH. Residues Asp349 and 370–371 (DI) contribute to the NAD(+) site. UDP-alpha-D-glucuronate contacts are provided by residues Ala395, Tyr400, and 434-435 (TS). Catalysis depends on Glu436, which acts as the Proton acceptor; for decarboxylase activity. UDP-alpha-D-glucuronate is bound by residues Arg462, Asn493, 527–536 (RLVDGGAQKR), and Tyr614. The active-site Proton donor; for decarboxylase activity is Arg620.

In the N-terminal section; belongs to the Fmt family. UDP-L-Ara4N formyltransferase subfamily. The protein in the C-terminal section; belongs to the NAD(P)-dependent epimerase/dehydratase family. UDP-glucuronic acid decarboxylase subfamily. In terms of assembly, homohexamer, formed by a dimer of trimers.

The catalysed reaction is UDP-alpha-D-glucuronate + NAD(+) = UDP-beta-L-threo-pentopyranos-4-ulose + CO2 + NADH. It catalyses the reaction UDP-4-amino-4-deoxy-beta-L-arabinose + (6R)-10-formyltetrahydrofolate = UDP-4-deoxy-4-formamido-beta-L-arabinose + (6S)-5,6,7,8-tetrahydrofolate + H(+). The protein operates within nucleotide-sugar biosynthesis; UDP-4-deoxy-4-formamido-beta-L-arabinose biosynthesis; UDP-4-deoxy-4-formamido-beta-L-arabinose from UDP-alpha-D-glucuronate: step 1/3. Its pathway is nucleotide-sugar biosynthesis; UDP-4-deoxy-4-formamido-beta-L-arabinose biosynthesis; UDP-4-deoxy-4-formamido-beta-L-arabinose from UDP-alpha-D-glucuronate: step 3/3. It functions in the pathway bacterial outer membrane biogenesis; lipopolysaccharide biosynthesis. In terms of biological role, bifunctional enzyme that catalyzes the oxidative decarboxylation of UDP-glucuronic acid (UDP-GlcUA) to UDP-4-keto-arabinose (UDP-Ara4O) and the addition of a formyl group to UDP-4-amino-4-deoxy-L-arabinose (UDP-L-Ara4N) to form UDP-L-4-formamido-arabinose (UDP-L-Ara4FN). The modified arabinose is attached to lipid A and is required for resistance to polymyxin and cationic antimicrobial peptides. This Pseudomonas aeruginosa (strain LESB58) protein is Bifunctional polymyxin resistance protein ArnA.